The sequence spans 91 residues: Large ribosomal subunit protein eL37 (91 aa).

Zn(2+)-binding residues include C19, C22, C34, and C37. Residues 19-37 (CRRCGKSSFHIQKKTCASC) form a C4-type zinc finger.

It belongs to the eukaryotic ribosomal protein eL37 family. Zn(2+) serves as cofactor.

Binds to the 23S rRNA. The protein is Large ribosomal subunit protein eL37 (rpl37) of Dictyostelium discoideum (Social amoeba).